The primary structure comprises 172 residues: Thioredoxin M-type, chloroplastic (172 aa).

The N-terminal 60 residues, 1–60, are a transit peptide targeting the chloroplast; that stretch reads MALESLFKSIHTKTSLSSSIVFIFKGKACLLTSKSRIQESFAELNSFTSLVLLIENHVLL. Residues 61 to 172 enclose the Thioredoxin domain; that stretch reads HAREAVNEVQ…TLSEKVEKYI (112 aa). Active-site nucleophile residues include C97 and C100. C97 and C100 form a disulfide bridge.

The protein belongs to the thioredoxin family. Plant M-type subfamily. Forms a complex with heterodimeric ferredoxin-thioredoxin reductase (FTR) and ferredoxin.

It is found in the plastid. It localises to the chloroplast. Its function is as follows. Participates in various redox reactions through the reversible oxidation of the active center dithiol to a disulfide. The M form is known to activate NADP-malate dehydrogenase. This chain is Thioredoxin M-type, chloroplastic, found in Pisum sativum (Garden pea).